A 302-amino-acid polypeptide reads, in one-letter code: Probable lipid kinase YegS-like (302 aa).

A DAGKc domain is found at 1 to 129 (MDKDKVLLVL…IDLGAVNGKL (129 aa)). Residues Thr39, 65 to 71 (GDGTLRE), and Thr92 contribute to the ATP site. Residues Arg210, Asp213, and Leu215 each coordinate Mg(2+). Glu268 serves as the catalytic Proton acceptor.

It belongs to the diacylglycerol/lipid kinase family. YegS lipid kinase subfamily. Mg(2+) serves as cofactor. It depends on Ca(2+) as a cofactor.

Its subcellular location is the cytoplasm. In terms of biological role, probably phosphorylates lipids; the in vivo substrate is unknown. The polypeptide is Probable lipid kinase YegS-like (Pseudomonas aeruginosa (strain UCBPP-PA14)).